The following is a 307-amino-acid chain: Alpha N-terminal protein methyltransferase 1 (307 aa).

The span at 38 to 54 (EPAPAPAAGSNGVAGEQ) shows a compositional bias: low complexity. The tract at residues 38-60 (EPAPAPAAGSNGVAGEQEAGGGG) is disordered. S-adenosyl-L-methionine is bound by residues G123, R128, 145 to 147 (EPV), 179 to 180 (LQ), and Q195.

This sequence belongs to the methyltransferase superfamily. NTM1 family.

The enzyme catalyses N-terminal L-alanyl-L-prolyl-L-lysyl-[protein] + 3 S-adenosyl-L-methionine = N-terminal N,N,N-trimethyl-L-alanyl-L-prolyl-L-lysyl-[protein] + 3 S-adenosyl-L-homocysteine + 3 H(+). It carries out the reaction N-terminal L-seryl-L-prolyl-L-lysyl-[protein] + 3 S-adenosyl-L-methionine = N-terminal N,N,N-trimethyl-L-seryl-L-prolyl-L-lysyl-[protein] + 3 S-adenosyl-L-homocysteine + 3 H(+). The catalysed reaction is N-terminal L-prolyl-L-prolyl-L-lysyl-[protein] + 2 S-adenosyl-L-methionine = N-terminal N,N-dimethyl-L-prolyl-L-prolyl-L-lysyl-[protein] + 2 S-adenosyl-L-homocysteine + 2 H(+). In terms of biological role, alpha-N-methyltransferase that methylates the N-terminus of target proteins containing the N-terminal motif [Ala/Pro/Ser]-Pro-Lys when the initiator Met is cleaved. Specifically catalyzes mono-, di- or tri-methylation of exposed alpha-amino group of Ala or Ser residue in the [Ala/Ser]-Pro-Lys motif and mono- or di-methylation of Pro in the Pro-Pro-Lys motif. This chain is Alpha N-terminal protein methyltransferase 1, found in Oryza sativa subsp. indica (Rice).